The following is a 148-amino-acid chain: MIAQIPFWQRKRLADMTQPEWESLCDGCGKCCLQKLEDEDTGEVYHTDLVCRYMDLDTCGCTVYEQRLKKVPGCTVLTADTVLSYHWLPYTCAYRTLAEGRPLPDWHPLRSGDPDTVHQARVSVRGNVVSEDSVPEEDWEEHIIHWIL.

This sequence belongs to the UPF0260 family.

In Marinobacter nauticus (strain ATCC 700491 / DSM 11845 / VT8) (Marinobacter aquaeolei), this protein is UPF0260 protein Maqu_1608.